The following is a 148-amino-acid chain: UPF0758 protein YeeS (148 aa).

The 123-residue stretch at 26–148 (AFTSTRAARE…VFSFAEHGLL (123 aa)) folds into the MPN domain. Positions 97, 99, and 110 each coordinate Zn(2+). The JAMM motif signature appears at 97 to 110 (HNHPSGEVTPSKAD).

The protein belongs to the UPF0758 family.

This chain is UPF0758 protein YeeS (yeeS), found in Escherichia coli (strain K12).